A 345-amino-acid polypeptide reads, in one-letter code: Adenylosuccinate synthetase (345 aa).

GTP-binding positions include 18 to 24 and 48 to 50; these read GDEGKGK and GHT. D19 serves as the catalytic Proton acceptor. Residues D19 and G48 each contribute to the Mg(2+) site. IMP is bound by residues 19–22, 46–49, T133, R147, Q185, T200, and R262; these read DEGK and NAGH. Catalysis depends on H49, which acts as the Proton donor. Substrate is bound at residue 258–264; the sequence is TVTGRRR. GTP-binding positions include R264, 290–292, and 330–332; these read GLD and STG.

Belongs to the adenylosuccinate synthetase family. In terms of assembly, homodimer. The cofactor is Mg(2+).

It localises to the cytoplasm. The catalysed reaction is IMP + L-aspartate + GTP = N(6)-(1,2-dicarboxyethyl)-AMP + GDP + phosphate + 2 H(+). It functions in the pathway purine metabolism; AMP biosynthesis via de novo pathway; AMP from IMP: step 1/2. Plays an important role in the de novo pathway of purine nucleotide biosynthesis. Catalyzes the first committed step in the biosynthesis of AMP from IMP. The protein is Adenylosuccinate synthetase of Methanocaldococcus jannaschii (strain ATCC 43067 / DSM 2661 / JAL-1 / JCM 10045 / NBRC 100440) (Methanococcus jannaschii).